Here is a 718-residue protein sequence, read N- to C-terminus: MQEFDKSISFDGRDIRLKLGLLAPQAGGSVLIQSGDTAVLVTATRATGREGIDFLPLTVDYEERLYAAGRIPGGFLRREGRPPEKAILISRLIDRPLRPLFPQWLRDDIQIIATTLSMDEEVPPDVLAVTGASIAVIAARIPFFGPMAAVRVGLIGDDFIINPTYREIEIGDLDLVVAGSPDGVVMVEAGANQLPEQDIIEAIDFGYEAVRDLIQAQRDVMEALDIPLVIGEPPAVNEVLQSFISDRASESIKKVLMQYNLDKNARDEQLDEIKETAITNAIAELPEEDPVKVAATEEPKAVSNLYKDLTKKLMRSQIITDGVRVDGRKLDEVRPISSRVCLLPRRVHGSALFARGLTQVLSLATLGTPGDAQDLADDLHPEDEKRYLHHYNFPPFSVGETKPLRSPGRREIGHGALAERAITPILPPQEEFPYVIRVVSEVLSSNGSTSMGSVCGSTLALMDAGVPITKPVSGAAMGLIKEGDEVRILTDIQGIEDFLGDMDFKVAGTDSGITALQMDMKITGLSMEIVAKAIEQALPARLHILDKMMETLSTPRKNLSPYAPRLLTMKIDPEQIGLVIGPGGKTIKGITEQTGSKIDIADDGTVTIAALEAEKAEKAKQIIYNMTRKLNEGEVYMGRVTRIIQIGAFVEVLPGKEGMIHISQLAEGRVGKVEDEVAVGDEVIVKVREIDAKGRLNLTRLGIHPDEAAAARKAVAPV.

Mg(2+)-binding residues include Asp-497 and Asp-503. In terms of domain architecture, KH spans 564–623 (PRLLTMKIDPEQIGLVIGPGGKTIKGITEQTGSKIDIADDGTVTIAALEAEKAEKAKQII). The S1 motif domain maps to 633 to 701 (GEVYMGRVTR…AKGRLNLTRL (69 aa)).

This sequence belongs to the polyribonucleotide nucleotidyltransferase family. Mg(2+) is required as a cofactor.

The protein resides in the cytoplasm. The catalysed reaction is RNA(n+1) + phosphate = RNA(n) + a ribonucleoside 5'-diphosphate. In terms of biological role, involved in mRNA degradation. Catalyzes the phosphorolysis of single-stranded polyribonucleotides processively in the 3'- to 5'-direction. The sequence is that of Polyribonucleotide nucleotidyltransferase from Rippkaea orientalis (strain PCC 8801 / RF-1) (Cyanothece sp. (strain PCC 8801)).